The sequence spans 345 residues: Protein PXR1 (345 aa).

Disordered regions lie at residues 1–25 (MGLA…SNNN) and 166–317 (VEDE…ASRL). In terms of domain architecture, G-patch spans 25-71 (NNQFGHQYLTKMGWTPGKGIGLVPDSITTHLKINIKTDNAGLGAKLQ). The segment covering 187 to 227 (KKEKKEKKEKKEKKEKKEKKEKKEKKEKKEKKEKKEKKEKK) has biased composition (basic residues). Over residues 228 to 237 (EKKEKSDKKE) the composition is skewed to basic and acidic residues. A compositionally biased stretch (basic residues) spans 238 to 278 (KKEKKDKKEKKEKKEKKEKKEKKEKKEKKEKKEKKEKKEKK). Positions 279 to 288 (EKKDKLDKES) are enriched in basic and acidic residues. Polar residues predominate over residues 289-312 (SNAANVESTKSLVSDSSRESTPTP).

The protein belongs to the PINX1 family.

It is found in the nucleus. The protein resides in the nucleolus. In terms of biological role, involved in rRNA-processing at A0, A1 and A2 sites and negatively regulates telomerase. The polypeptide is Protein PXR1 (PXR1) (Lodderomyces elongisporus (strain ATCC 11503 / CBS 2605 / JCM 1781 / NBRC 1676 / NRRL YB-4239) (Yeast)).